Reading from the N-terminus, the 365-residue chain is Transcription factor TCP2 (365 aa).

Residues 42–100 form the TCP domain; sequence GKDRHSKVLTSKGPRDRRVRLSVSTALQFYDLQDRLGYDQPSKAVEWLIKAAEDSISEL. Low complexity predominate over residues 130–150; sequence KSACSSNSDTSKNSSGLSLSR. Disordered regions lie at residues 130-202 and 220-245; these read KSAC…SAPS and QTHF…HPHH. One can recognise a R domain in the interval 151 to 172; it reads SELRDKARERARERTAKETKER. A compositionally biased stretch (basic and acidic residues) spans 151-176; sequence SELRDKARERARERTAKETKERDHNH. A compositionally biased stretch (polar residues) spans 177–202; it reads TSFTDLLNSGSDPVNSNRQWMASAPS.

In terms of assembly, interacts with SPL. Interacts with CRY1. In terms of tissue distribution, expressed in cotyledons, particularly in the vascular region, in leaves, roots, buds, flowers and immature siliques.

It localises to the nucleus. Functionally, plays a pivotal role in the control of morphogenesis of shoot organs by negatively regulating the expression of boundary-specific genes such as CUC genes, probably through the induction of miRNA (e.g. miR164). Participates in ovule development. Promotes light-regulated transcription of CHS, CAB, HYH and HY5. Positively regulates photomorphogenesis (e.g. hypocotyl elongation inhibition and cotyledon opening in response to blue light). This is Transcription factor TCP2 from Arabidopsis thaliana (Mouse-ear cress).